We begin with the raw amino-acid sequence, 576 residues long: MDIKLLYRLIKYLKFYKKDLIIVMISLLSVSASLLLIGSVFRNLVDNGLSQNHILSVDKSILYICLLIIILSIASFFRSYFINNVAEKAVNQIRKDAYSNLITYEIEEFEELKIGDIISRLTNDIDQISTLIVNFLSFFIRNSVMLIGGVTLMFFESFKLASIVIITIPILLIPLIKFGKHVKALSKKALESKSLLASDIDETFNNIRAIYAFNNQTNKITDFDTKLQNYLTYCKTRLKIRALFFAISIAIIFLAITLVVWIGASDIVKGNLSAGQIISFIYYAIIAGFSSGGIFELLSEIHLPLAALERIITIIDKTPITHNSYLELNNSDPISIEFKNVDFTYHSRPNLRIINNMSLKINADKFIGIVGRSGGGKSTLMQLLLRFYRQESGTILINNQDITLSNPAEIRKLIAYVPQEANIFSGTIKSNIIFGNTQASDDDINEIIKITGIEEFAAKLHDGINAKIGERGVRLSGGQKQRIAIARALLRKPQILLLDEAMSALDTMSEQKLLESIKEIMKGKIIISIAHRISSIESADYILVIDKGGVAASGSHNDLSKNSEIYRNICREQLTV.

One can recognise an ABC transmembrane type-1 domain in the interval leucine 20–leucine 303. The next 6 helical transmembrane spans lie at isoleucine 21–phenylalanine 41, isoleucine 61–phenylalanine 81, phenylalanine 135–phenylalanine 155, phenylalanine 158–phenylalanine 178, alanine 242–isoleucine 262, and isoleucine 277–leucine 297. Residues isoleucine 336–glutamate 572 enclose the ABC transporter domain. An ATP-binding site is contributed by glycine 371–serine 378.

Belongs to the ABC transporter superfamily. In terms of assembly, homodimer.

The protein localises to the cell inner membrane. In terms of biological role, part of an ABC transporter complex. Transmembrane domains (TMD) form a pore in the inner membrane and the ATP-binding domain (NBD) is responsible for energy generation. This chain is Putative export ATP-binding/permease protein RF_0214, found in Rickettsia felis (strain ATCC VR-1525 / URRWXCal2) (Rickettsia azadi).